Here is a 308-residue protein sequence, read N- to C-terminus: Quinolinate synthase (308 aa).

Iminosuccinate contacts are provided by H21 and S38. Residue C83 coordinates [4Fe-4S] cluster. Residues 109–111 (YIN) and S126 each bind iminosuccinate. A [4Fe-4S] cluster-binding site is contributed by C170. Residues 196–198 (HPE) and T213 contribute to the iminosuccinate site. C263 contacts [4Fe-4S] cluster.

This sequence belongs to the quinolinate synthase family. Type 2 subfamily. [4Fe-4S] cluster serves as cofactor.

The protein localises to the cytoplasm. It carries out the reaction iminosuccinate + dihydroxyacetone phosphate = quinolinate + phosphate + 2 H2O + H(+). It functions in the pathway cofactor biosynthesis; NAD(+) biosynthesis; quinolinate from iminoaspartate: step 1/1. Functionally, catalyzes the condensation of iminoaspartate with dihydroxyacetone phosphate to form quinolinate. This Sulfurisphaera tokodaii (strain DSM 16993 / JCM 10545 / NBRC 100140 / 7) (Sulfolobus tokodaii) protein is Quinolinate synthase.